Consider the following 102-residue polypeptide: Large ribosomal subunit protein bL21 (102 aa).

It belongs to the bacterial ribosomal protein bL21 family. In terms of assembly, part of the 50S ribosomal subunit. Contacts protein L20.

This protein binds to 23S rRNA in the presence of protein L20. The polypeptide is Large ribosomal subunit protein bL21 (Ehrlichia chaffeensis (strain ATCC CRL-10679 / Arkansas)).